Here is a 308-residue protein sequence, read N- to C-terminus: Cytochrome b (308 aa).

Helical transmembrane passes span 1 to 21 (FGSL…LLAT), 45 to 66 (WLIR…YLHI), 81 to 101 (WNTG…GYVL), and 146 to 166 (FFAL…IHFT). His-65 is a binding site for heme b. Residues His-150 and His-164 each contribute to the heme b site. Residue His-169 coordinates a ubiquinone. The next 3 helical transmembrane spans lie at 194-214 (VKDI…ALFS), 256-276 (LGGV…PFLH), and 288-308 (LSQF…WVGS).

The protein belongs to the cytochrome b family. In terms of assembly, the cytochrome bc1 complex contains 11 subunits: 3 respiratory subunits (MT-CYB, CYC1 and UQCRFS1), 2 core proteins (UQCRC1 and UQCRC2) and 6 low-molecular weight proteins (UQCRH/QCR6, UQCRB/QCR7, UQCRQ/QCR8, UQCR10/QCR9, UQCR11/QCR10 and a cleavage product of UQCRFS1). This cytochrome bc1 complex then forms a dimer. The cofactor is heme b.

Its subcellular location is the mitochondrion inner membrane. Its function is as follows. Component of the ubiquinol-cytochrome c reductase complex (complex III or cytochrome b-c1 complex) that is part of the mitochondrial respiratory chain. The b-c1 complex mediates electron transfer from ubiquinol to cytochrome c. Contributes to the generation of a proton gradient across the mitochondrial membrane that is then used for ATP synthesis. The chain is Cytochrome b (MT-CYB) from Colaptes rupicola (Southern Andean flicker).